A 218-amino-acid polypeptide reads, in one-letter code: Adenylate kinase (218 aa).

10-15 (GAGKGT) serves as a coordination point for ATP. The interval 30 to 59 (STGDMLRAAVKAGSPLGLKVKDIMTSGGLV) is NMP. AMP contacts are provided by residues Thr31, Arg36, 57–59 (GLV), 85–88 (GFPR), and Gln92. The interval 122–159 (GRRVHEASGRVYHVKHNAPKTEGVDDETGEPLVQRDDD) is LID. ATP contacts are provided by residues Arg123 and 132 to 133 (VY). AMP is bound by residues Arg156 and Arg167. Residue Gly203 participates in ATP binding.

It belongs to the adenylate kinase family. As to quaternary structure, monomer.

The protein localises to the cytoplasm. It carries out the reaction AMP + ATP = 2 ADP. The protein operates within purine metabolism; AMP biosynthesis via salvage pathway; AMP from ADP: step 1/1. Catalyzes the reversible transfer of the terminal phosphate group between ATP and AMP. Plays an important role in cellular energy homeostasis and in adenine nucleotide metabolism. The sequence is that of Adenylate kinase from Saccharophagus degradans (strain 2-40 / ATCC 43961 / DSM 17024).